The primary structure comprises 121 residues: Ribonuclease P protein component (121 aa).

Belongs to the RnpA family. Consists of a catalytic RNA component (M1 or rnpB) and a protein subunit.

The enzyme catalyses Endonucleolytic cleavage of RNA, removing 5'-extranucleotides from tRNA precursor.. RNaseP catalyzes the removal of the 5'-leader sequence from pre-tRNA to produce the mature 5'-terminus. It can also cleave other RNA substrates such as 4.5S RNA. The protein component plays an auxiliary but essential role in vivo by binding to the 5'-leader sequence and broadening the substrate specificity of the ribozyme. The chain is Ribonuclease P protein component from Neisseria meningitidis serogroup B (strain ATCC BAA-335 / MC58).